The following is a 412-amino-acid chain: P-selectin glycoprotein ligand 1 (412 aa).

The signal sequence occupies residues 1–17; that stretch reads MPLQLLLLLILLGPGNS. The propeptide occupies 18-41; it reads LQLWDTWADEAEKALGPLLARDRR. Topologically, residues 18–320 are extracellular; that stretch reads LQLWDTWADE…APDHISVKQC (303 aa). Q42 carries the pyrrolidone carboxylic acid modification. 3 positions are modified to sulfotyrosine: Y46, Y48, and Y51. The disordered stretch occupies residues 56–95; it reads ETEPPEMLRNSTDTTPLTGPGTPESTTVEPAARRSTGLDA. O-linked (GalNAc...) threonine glycosylation is present at T57. N-linked (GlcNAc...) asparagine glycosylation is present at N65. A compositionally biased stretch (low complexity) spans 66 to 82; sequence STDTTPLTGPGTPESTT. N-linked (GlcNAc...) asparagine glycosylation occurs at N111. 12 repeat units span residues 122–131, 132–141, 142–151, 162–171, 182–191, 192–201, 202–211, 212–221, 222–231, 232–241, 242–251, and 252–261. The segment at 122 to 261 is 12 X 10 AA tandem repeats; sequence QTTQPAATEA…QTTPLAAMEA (140 aa). Disordered stretches follow at residues 125–146 and 166–252; these read QPAATEAQTTQPVPTEAQTTPL and LAAT…TEAQ. N-linked (GlcNAc...) asparagine glycosylation is present at N302. The helical transmembrane segment at 321–341 threads the bilayer; it reads LLAILILALVATIFFVCTVVL. At 342–412 the chain is on the cytoplasmic side; it reads AVRLSRKGHM…DDLTLHSFLP (71 aa). Residues 374–412 form a disordered region; it reads EGPSATANGGLSKAKSPGLTPEPREDREGDDLTLHSFLP. Residues 395–406 show a composition bias toward basic and acidic residues; that stretch reads EPREDREGDDLT. T406 carries the post-translational modification Phosphothreonine. At S409 the chain carries Phosphoserine.

Homodimer; disulfide-linked. Interaction with P-, E- and L-selectins, through their lectin/EGF domains, is required for promoting recruitment and rolling of leukocytes. These interactions require sialyl Lewis X glycan modification but there is a differing dependence for tyrosine sulfations. Sulfation on Tyr-51 of PSGL1 is most important for high affinity L-selectin/SELL binding while P-selectin/SELP requires sulfation on Tyr-48. E-selectin/SELE binds with much lower affinity and requires the sLe(x) epitope, but apparently not tyrosine sulfation. Dimerization appears not to be required for P-selectin/SELP binding. Interacts with SNX20. Interacts with MSN and SYK; mediates the activation of SYK by SELPLG. Interacts with HAVCR1. As to quaternary structure, (Microbial infection) Interacts with enterovirus 71 capsid proteins. In terms of assembly, (Microbial infection) Interacts with Staphylococcus aureus proteins SSL5 and SSL11; these interactions prevent SELPLG-mediated neutrophil rolling. Post-translationally, displays complex, core-2, sialylated and fucosylated O-linked oligosaccharides, at least some of which appear to contain poly-N-acetyllactosamine with varying degrees of substitution. Mainly disialylated or neutral forms of the core-2 tetrasaccharide, Galbeta1--&gt;4GlcNAcbeta1--&gt;6(Galbeta1--&gt;3)GalNAcOH. The GlcN:GalN ratio is approximately 2:1 and the Man:Fuc ratio 3:5. Contains about 14% fucose with alpha-1,3 linkage present in two forms: One species is a disialylated, monofucosylated glycan, and the other, a monosialylated, trifucosylated glycan with a polylactosamine backbone. The fucosylated forms carry the Lewis antigen and are important for interaction with selectins and for functioning in leukocyte rolling. The modification containing the sialyl Lewis X glycan is on Thr-57. No sulfated O-glycans. Some N-glycosylation. Sulfation, in conjunction with the SLe(x)-containing glycan, is necessary for P- and L-selectin binding. High affinity P-selectin binding has a preferred requirement for the isomer sulfated on both Tyr-48 and Tyr-51, whereas L-selectin binding requires predominantly sulfation on Tyr-51 with sulfation on Tyr-48 playing only a minor role. These sulfations play an important role in L- and P-selectin-mediated neutrophil recruitment, and leukocyte rolling. In terms of tissue distribution, expressed on neutrophils, monocytes and most lymphocytes.

Its subcellular location is the membrane. In terms of biological role, a SLe(x)-type proteoglycan, which through high affinity, calcium-dependent interactions with E-, P- and L-selectins, mediates rapid rolling of leukocytes over vascular surfaces during the initial steps in inflammation. Critical for the initial leukocyte capture. Its function is as follows. (Microbial infection) Acts as a receptor for enterovirus 71. The chain is P-selectin glycoprotein ligand 1 (SELPLG) from Homo sapiens (Human).